A 231-amino-acid chain; its full sequence is 2-C-methyl-D-erythritol 4-phosphate cytidylyltransferase (231 aa).

The protein belongs to the IspD/TarI cytidylyltransferase family. IspD subfamily.

It catalyses the reaction 2-C-methyl-D-erythritol 4-phosphate + CTP + H(+) = 4-CDP-2-C-methyl-D-erythritol + diphosphate. It functions in the pathway isoprenoid biosynthesis; isopentenyl diphosphate biosynthesis via DXP pathway; isopentenyl diphosphate from 1-deoxy-D-xylulose 5-phosphate: step 2/6. Functionally, catalyzes the formation of 4-diphosphocytidyl-2-C-methyl-D-erythritol from CTP and 2-C-methyl-D-erythritol 4-phosphate (MEP). This chain is 2-C-methyl-D-erythritol 4-phosphate cytidylyltransferase, found in Mycobacterium bovis (strain BCG / Pasteur 1173P2).